The chain runs to 593 residues: Arginine--tRNA ligase (593 aa).

The 'HIGH' region motif lies at Ala138–His148.

This sequence belongs to the class-I aminoacyl-tRNA synthetase family. In terms of assembly, monomer.

Its subcellular location is the cytoplasm. The enzyme catalyses tRNA(Arg) + L-arginine + ATP = L-arginyl-tRNA(Arg) + AMP + diphosphate. This is Arginine--tRNA ligase from Burkholderia orbicola (strain MC0-3).